The chain runs to 95 residues: DNA-directed RNA polymerase subunit Rpo11 (95 aa).

It belongs to the archaeal Rpo11/eukaryotic RPB11/RPC19 RNA polymerase subunit family. As to quaternary structure, part of the RNA polymerase complex.

It is found in the cytoplasm. The enzyme catalyses RNA(n) + a ribonucleoside 5'-triphosphate = RNA(n+1) + diphosphate. In terms of biological role, DNA-dependent RNA polymerase (RNAP) catalyzes the transcription of DNA into RNA using the four ribonucleoside triphosphates as substrates. The polypeptide is DNA-directed RNA polymerase subunit Rpo11 (Pyrococcus furiosus (strain ATCC 43587 / DSM 3638 / JCM 8422 / Vc1)).